The chain runs to 327 residues: Malate dehydrogenase (327 aa).

11–17 provides a ligand contact to NAD(+); the sequence is GAAGQIA. The substrate site is built by arginine 92 and arginine 98. Residues asparagine 105, glutamine 112, and 128–130 contribute to the NAD(+) site; that span reads VGN. The substrate site is built by asparagine 130 and arginine 160. The active-site Proton acceptor is the histidine 185.

The protein belongs to the LDH/MDH superfamily. MDH type 2 family.

It catalyses the reaction (S)-malate + NAD(+) = oxaloacetate + NADH + H(+). Its function is as follows. Catalyzes the reversible oxidation of malate to oxaloacetate. This is Malate dehydrogenase from Magnetococcus marinus (strain ATCC BAA-1437 / JCM 17883 / MC-1).